A 389-amino-acid polypeptide reads, in one-letter code: 5-hydroxytryptamine receptor 1B (389 aa).

At 1-45 (MGNPEASCTPPAVLGSQTGLPHANVSAPPNNCSAPSHIYQDSIAL) the chain is on the extracellular side. N24 and N31 each carry an N-linked (GlcNAc...) asparagine glycan. A helical transmembrane segment spans residues 46–71 (PWKVLLVVLLALITLATTLSNAFVIA). Over 72–85 (TVYRTRKLHTPANY) the chain is Cytoplasmic. The helical transmembrane segment at 86 to 110 (LIASLAFTDLLVSILVMPISTMYTV) threads the bilayer. Topologically, residues 111 to 118 (TGRWTLGQ) are extracellular. A helical transmembrane segment spans residues 119-144 (ALCDFWLSSDITCCTASIMHLCVIAL). The cysteines at positions 121 and 198 are disulfide-linked. Residues D128 and T133 each contribute to the ergotamine site. Residues 145–147 (DRY) carry the DRY motif; important for ligand-induced conformation changes and signaling motif. Topologically, residues 145 to 164 (DRYWAITDAVGYSAKRTPRR) are cytoplasmic. A helical transmembrane segment spans residues 165–183 (AAGMIALVWVFSICISLPP). Topologically, residues 184–204 (FFWRQAKAEEEVLDCLVNTDH) are extracellular. Position 200 (V200) interacts with ergotamine. A helical transmembrane segment spans residues 205-228 (VLYTVYSTGGAFYLPTLLLIALYG). Topologically, residues 229 to 314 (RIYVEARSRI…AARERKATKT (86 aa)) are cytoplasmic. A helical transmembrane segment spans residues 315-336 (LGVILGAFIVCWLPFFIISLVM). The Extracellular portion of the chain corresponds to 337 to 346 (PICKDACWFH). A helical membrane pass occupies residues 347–369 (MAIFDFFTWLGYLNSLINPIIYT). The NPxxY motif; important for ligand-induced conformation changes and signaling signature appears at 364–368 (NPIIY). The Cytoplasmic portion of the chain corresponds to 370–389 (MSNEDFKQAFHKLIRFKCTT). Residue C387 is the site of S-palmitoyl cysteine attachment.

The protein belongs to the G-protein coupled receptor 1 family. As to quaternary structure, homodimer. Heterodimer with HTR1D. Phosphorylated. Desensitization of the receptor may be mediated by its phosphorylation. Post-translationally, palmitoylated.

It localises to the cell membrane. Functionally, G-protein coupled receptor for 5-hydroxytryptamine (serotonin). Also functions as a receptor for ergot alkaloid derivatives, various anxiolytic and antidepressant drugs and other psychoactive substances, such as lysergic acid diethylamide (LSD). Ligand binding causes a conformation change that triggers signaling via guanine nucleotide-binding proteins (G proteins) and modulates the activity of downstream effectors, such as adenylate cyclase. HTR1B is coupled to G(i)/G(o) G alpha proteins and mediates inhibitory neurotransmission by inhibiting adenylate cyclase activity. Arrestin family members inhibit signaling via G proteins and mediate activation of alternative signaling pathways. Regulates the release of 5-hydroxytryptamine, dopamine and acetylcholine in the brain, and thereby affects neural activity, nociceptive processing, pain perception, mood and behavior. Besides, plays a role in vasoconstriction of cerebral arteries. This Cavia porcellus (Guinea pig) protein is 5-hydroxytryptamine receptor 1B (HTR1B).